Reading from the N-terminus, the 137-residue chain is Small ribosomal subunit protein uS12 (137 aa).

Residues 1–57 (MPTINQLVRKPRKSKVEKSKSPALNVGYNSRKKVQTNVSSPQKRGVATRVGTMTPKK) are disordered. Position 102 is a 3-methylthioaspartic acid (Asp102).

It belongs to the universal ribosomal protein uS12 family. Part of the 30S ribosomal subunit. Contacts proteins S8 and S17. May interact with IF1 in the 30S initiation complex.

In terms of biological role, with S4 and S5 plays an important role in translational accuracy. Its function is as follows. Interacts with and stabilizes bases of the 16S rRNA that are involved in tRNA selection in the A site and with the mRNA backbone. Located at the interface of the 30S and 50S subunits, it traverses the body of the 30S subunit contacting proteins on the other side and probably holding the rRNA structure together. The combined cluster of proteins S8, S12 and S17 appears to hold together the shoulder and platform of the 30S subunit. The sequence is that of Small ribosomal subunit protein uS12 from Streptococcus suis (strain 98HAH33).